The sequence spans 864 residues: DNA mismatch repair protein MutS (864 aa).

607–614 (GPNMGGKS) is a binding site for ATP.

It belongs to the DNA mismatch repair MutS family.

Its function is as follows. This protein is involved in the repair of mismatches in DNA. It is possible that it carries out the mismatch recognition step. This protein has a weak ATPase activity. This Neisseria meningitidis serogroup C / serotype 2a (strain ATCC 700532 / DSM 15464 / FAM18) protein is DNA mismatch repair protein MutS.